Reading from the N-terminus, the 421-residue chain is Solute carrier family 35 member F3 (421 aa).

Positions glutamate 25–valine 45 are disordered. Helical transmembrane passes span isoleucine 66–leucine 86, phenylalanine 98–glycine 118, valine 149–leucine 169, aspartate 179–leucine 199, isoleucine 208–histidine 228, valine 232–phenylalanine 252, leucine 266–leucine 286, leucine 305–valine 325, threonine 326–aspartate 346, and isoleucine 352–leucine 372. The tract at residues lysine 393 to arginine 421 is disordered. Over residues lysine 411 to arginine 421 the composition is skewed to basic residues.

This sequence belongs to the SLC35F solute transporter family. In terms of tissue distribution, expressed at the highest levels in the adult cerebellum.

Its subcellular location is the membrane. It carries out the reaction thiamine(in) = thiamine(out). Its function is as follows. Mediates thiamine transport. The sequence is that of Solute carrier family 35 member F3 from Homo sapiens (Human).